We begin with the raw amino-acid sequence, 164 residues long: Phosphatidyl-N-methylethanolamine N-methyltransferase (164 aa).

The segment at residues 1–21 (MGLLAAIGVLLPFPFYWWLWT) is an intramembrane region (helical). Over 22–30 (NAQSWVNLC) the chain is Lumenal. The helical transmembrane segment at 31–52 (GRERDPSTVMARVSHVLKAAQL) threads the bilayer. At 53-69 (LSLFSVASLSWPPPLYF) the chain is on the cytoplasmic side. A helical membrane pass occupies residues 70 to 90 (WPLMAFGQFLNFRVYQLLGEA). 74–76 (AFG) is a binding site for S-adenosyl-L-methionine. At 91-131 (GTYYGVRFGKNIPWVTEFPFGVIRDPQYVGSIMSLLACLSW) the chain is on the lumenal side. A helical transmembrane segment spans residues 132-151 (VPFQYILLWSLGYVFMMFLE). Residues 152–164 (SKEDPNARAKSIS) lie on the Cytoplasmic side of the membrane. S-adenosyl-L-methionine is bound at residue 154 to 155 (ED).

Belongs to the class VI-like SAM-binding methyltransferase superfamily. PEMT/PEM2 methyltransferase family.

It is found in the endoplasmic reticulum membrane. The enzyme catalyses a 1,2-diacyl-sn-glycero-3-phospho-N-methylethanolamine + S-adenosyl-L-methionine = a 1,2-diacyl-sn-glycero-3-phospho-N,N-dimethylethanolamine + S-adenosyl-L-homocysteine + H(+). The catalysed reaction is a 1,2-diacyl-sn-glycero-3-phospho-N,N-dimethylethanolamine + S-adenosyl-L-methionine = a 1,2-diacyl-sn-glycero-3-phosphocholine + S-adenosyl-L-homocysteine + H(+). It participates in phospholipid metabolism; phosphatidylcholine biosynthesis. Functionally, catalyzes the second two steps of the methylation pathway of phosphatidylcholine biosynthesis, the SAM-dependent methylation of phosphatidylmonomethylethanolamine (PMME) to phosphatidyldimethylethanolamine (PDME) and of PDME to phosphatidylcholine (PC). In Arabidopsis thaliana (Mouse-ear cress), this protein is Phosphatidyl-N-methylethanolamine N-methyltransferase (PLMT).